We begin with the raw amino-acid sequence, 75 residues long: U6-lycotoxin-Ls1b (75 aa).

A signal peptide spans 1-21; the sequence is MKLLLFTALVLVVISLIEVEA. The propeptide occupies 22–25; sequence ENER.

This sequence belongs to the neurotoxin 19 (CSTX) family. 06 (U6-Lctx) subfamily. Contains 4 disulfide bonds. Expressed by the venom gland.

It localises to the secreted. This Lycosa singoriensis (Wolf spider) protein is U6-lycotoxin-Ls1b.